We begin with the raw amino-acid sequence, 153 residues long: ATP synthase subunit b' (153 aa).

The chain crosses the membrane as a helical span at residues 20–40; the sequence is TLPLMAVQVVLLTFILNALFF.

It belongs to the ATPase B chain family. F-type ATPases have 2 components, F(1) - the catalytic core - and F(0) - the membrane proton channel. F(1) has five subunits: alpha(3), beta(3), gamma(1), delta(1), epsilon(1). F(0) has four main subunits: a(1), b(1), b'(1) and c(10-14). The alpha and beta chains form an alternating ring which encloses part of the gamma chain. F(1) is attached to F(0) by a central stalk formed by the gamma and epsilon chains, while a peripheral stalk is formed by the delta, b and b' chains.

Its subcellular location is the cellular thylakoid membrane. In terms of biological role, f(1)F(0) ATP synthase produces ATP from ADP in the presence of a proton or sodium gradient. F-type ATPases consist of two structural domains, F(1) containing the extramembraneous catalytic core and F(0) containing the membrane proton channel, linked together by a central stalk and a peripheral stalk. During catalysis, ATP synthesis in the catalytic domain of F(1) is coupled via a rotary mechanism of the central stalk subunits to proton translocation. Its function is as follows. Component of the F(0) channel, it forms part of the peripheral stalk, linking F(1) to F(0). The b'-subunit is a diverged and duplicated form of b found in plants and photosynthetic bacteria. The chain is ATP synthase subunit b' from Prochlorococcus marinus (strain MIT 9211).